The primary structure comprises 335 residues: N-acetyl-gamma-glutamyl-phosphate reductase (335 aa).

C147 is a catalytic residue.

This sequence belongs to the NAGSA dehydrogenase family. Type 1 subfamily.

The protein localises to the cytoplasm. The catalysed reaction is N-acetyl-L-glutamate 5-semialdehyde + phosphate + NADP(+) = N-acetyl-L-glutamyl 5-phosphate + NADPH + H(+). The protein operates within amino-acid biosynthesis; L-arginine biosynthesis; N(2)-acetyl-L-ornithine from L-glutamate: step 3/4. In terms of biological role, catalyzes the NADPH-dependent reduction of N-acetyl-5-glutamyl phosphate to yield N-acetyl-L-glutamate 5-semialdehyde. The polypeptide is N-acetyl-gamma-glutamyl-phosphate reductase (Campylobacter hominis (strain ATCC BAA-381 / DSM 21671 / CCUG 45161 / LMG 19568 / NCTC 13146 / CH001A)).